Here is a 382-residue protein sequence, read N- to C-terminus: GDP-mannose 4,6 dehydratase 2 (382 aa).

Residues 40-45 (GITGQD), 97-98 (DM), 119-123 (LAAQS), and Y134 each bind NADP(+). The active site involves T166. Active-site nucleophile residues include E168 and Y190. Positions 194, 220, and 225 each coordinate NADP(+).

It belongs to the NAD(P)-dependent epimerase/dehydratase family. GDP-mannose 4,6-dehydratase subfamily. Requires NADP(+) as cofactor.

It catalyses the reaction GDP-alpha-D-mannose = GDP-4-dehydro-alpha-D-rhamnose + H2O. It functions in the pathway nucleotide-sugar biosynthesis; GDP-L-fucose biosynthesis via de novo pathway; GDP-L-fucose from GDP-alpha-D-mannose: step 1/2. Its function is as follows. Catalyzes the conversion of GDP-D-mannose to GDP-4-dehydro-6-deoxy-D-mannose. The sequence is that of GDP-mannose 4,6 dehydratase 2 (gmd-2) from Caenorhabditis elegans.